A 216-amino-acid polypeptide reads, in one-letter code: Peptide methionine sulfoxide reductase MsrA (216 aa).

Residue Cys-54 is part of the active site.

Belongs to the MsrA Met sulfoxide reductase family.

It carries out the reaction L-methionyl-[protein] + [thioredoxin]-disulfide + H2O = L-methionyl-(S)-S-oxide-[protein] + [thioredoxin]-dithiol. The catalysed reaction is [thioredoxin]-disulfide + L-methionine + H2O = L-methionine (S)-S-oxide + [thioredoxin]-dithiol. Its function is as follows. Has an important function as a repair enzyme for proteins that have been inactivated by oxidation. Catalyzes the reversible oxidation-reduction of methionine sulfoxide in proteins to methionine. The chain is Peptide methionine sulfoxide reductase MsrA from Xanthomonas campestris pv. phaseoli.